We begin with the raw amino-acid sequence, 114 residues long: Reprimo-like protein (114 aa).

The chain crosses the membrane as a helical span at residues 61–81; the sequence is VVQIAVLCVLSLTVMFGIFFL.

This sequence belongs to the reprimo family.

It localises to the membrane. This is Reprimo-like protein (rprml) from Danio rerio (Zebrafish).